The chain runs to 346 residues: NSSLPTNISGGTPAVSAGYLFLDIITYLVFAVTFVLGVLGNGLVIWVAGFRMRHTVTTISYLNLAVADFCFTSTLPFLMVVKVMRGHWPFGWFLCKFIFTIVDINLFGSVFLIALIALDRCVCVLHPVWTQNHRTVSLAKKVIIGPWVMALLLTLPVIIRVTTVPGKTGTVACTFDFSPWTNDPVEKLKVTIAMLTVRGIIRFIIGFSVPMSIVAVSYGLIATKIHKQGLIKSSRPLRVLSFVVAAFFLCWSPYQVVAFIATVRLRNILQGLSKELRIAVDATSALAFFNSCLNPMLYVFMGQDFRERLIHSLPTSLERALTEDSAQTSDTATNSTLPSAEVPLQA.

N-linked (GlcNAc...) asparagine glycosylation is found at Asn1 and Asn7. The Extracellular portion of the chain corresponds to 1–24; that stretch reads NSSLPTNISGGTPAVSAGYLFLDI. The chain crosses the membrane as a helical span at residues 25-47; that stretch reads ITYLVFAVTFVLGVLGNGLVIWV. At 48–58 the chain is on the cytoplasmic side; that stretch reads AGFRMRHTVTT. The chain crosses the membrane as a helical span at residues 59–80; sequence ISYLNLAVADFCFTSTLPFLMV. Over 81–97 the chain is Extracellular; it reads VKVMRGHWPFGWFLCKF. A disulfide bridge links Cys95 with Cys173. Residues 98-118 traverse the membrane as a helical segment; it reads IFTIVDINLFGSVFLIALIAL. Residues 119 to 137 are Cytoplasmic-facing; the sequence is DRCVCVLHPVWTQNHRTVS. The helical transmembrane segment at 138 to 159 threads the bilayer; sequence LAKKVIIGPWVMALLLTLPVII. Residues 160 to 202 lie on the Extracellular side of the membrane; sequence RVTTVPGKTGTVACTFDFSPWTNDPVEKLKVTIAMLTVRGIIR. The chain crosses the membrane as a helical span at residues 203-223; it reads FIIGFSVPMSIVAVSYGLIAT. Topologically, residues 224–239 are cytoplasmic; sequence KIHKQGLIKSSRPLRV. The helical transmembrane segment at 240–263 threads the bilayer; that stretch reads LSFVVAAFFLCWSPYQVVAFIATV. The Extracellular portion of the chain corresponds to 264 to 282; sequence RLRNILQGLSKELRIAVDA. Residues 283–302 traverse the membrane as a helical segment; the sequence is TSALAFFNSCLNPMLYVFMG. Residues 303-346 are Cytoplasmic-facing; the sequence is QDFRERLIHSLPTSLERALTEDSAQTSDTATNSTLPSAEVPLQA. The tract at residues 321-346 is disordered; sequence LTEDSAQTSDTATNSTLPSAEVPLQA. Residues 324 to 338 show a composition bias toward polar residues; sequence DSAQTSDTATNSTLP.

Belongs to the G-protein coupled receptor 1 family. Phosphorylated; which is necessary for desensitization.

It is found in the cell membrane. Functionally, high affinity receptor for N-formyl-methionyl peptides (fMLP), which are powerful neutrophil chemotactic factors. Binding of fMLP to the receptor stimulates intracellular calcium mobilization and superoxide anion release. This response is mediated via a G-protein that activates a phosphatidylinositol-calcium second messenger system. Receptor for TAFA4, mediates its effects on chemoattracting macrophages, promoting phagocytosis and increasing ROS release. Receptor for cathepsin CTSG, leading to increased phagocyte chemotaxis. This chain is fMet-Leu-Phe receptor (FPR1), found in Macaca mulatta (Rhesus macaque).